The sequence spans 193 residues: Putative manganese efflux pump MntP (193 aa).

6 consecutive transmembrane segments (helical) span residues 3 to 23 (PLSIVLLGFAMSTDAFAAAIG), 37 to 57 (VRAGLVFGCIEAITPVIGWML), 66 to 86 (AAFDHWIAFGLLGALGAHMIV), 109 to 131 (LALAATGFATSIDAMAVGVSLAF), 146 to 166 (CTLSMVTAGVMLGRALGALIG), and 171 to 191 (ILGGVILILIGSTILYEHLSG).

Belongs to the MntP (TC 9.B.29) family.

Its subcellular location is the cell inner membrane. Its function is as follows. Probably functions as a manganese efflux pump. In Xanthomonas campestris pv. campestris (strain 8004), this protein is Putative manganese efflux pump MntP.